An 85-amino-acid chain; its full sequence is Large ribosomal subunit protein bL27 (85 aa).

The disordered stretch occupies residues 1–20 (MAHKKAAGSSRNGRDSNPKM).

This sequence belongs to the bacterial ribosomal protein bL27 family.

This chain is Large ribosomal subunit protein bL27, found in Psychrobacter arcticus (strain DSM 17307 / VKM B-2377 / 273-4).